A 395-amino-acid chain; its full sequence is Sensor protein DltS (395 aa).

The next 2 helical transmembrane spans lie at 9–29 (FVFLTMSILIVVVLFLFAVSN) and 136–156 (FLILVFTIFGFCLLAAVSLYL). A Histidine kinase domain is found at 177 to 387 (DASHELKTPI…RLEVQLPIDG (211 aa)). His-180 is subject to Phosphohistidine; by autocatalysis.

Its subcellular location is the cell membrane. It carries out the reaction ATP + protein L-histidine = ADP + protein N-phospho-L-histidine.. Functionally, member of the two-component regulatory system DltS/DltR. Regulates the expression of the dlt operon. Probably phosphorylates DltR. This is Sensor protein DltS (dltS) from Streptococcus agalactiae serotype III (strain NEM316).